The sequence spans 1499 residues: Tyrosine-protein phosphatase non-receptor type 23 (1499 aa).

Positions 1-219 (LNVNLMLGQA…AKIEDKNEVL (219 aa)) constitute a BRO1 domain. 2 TPR repeats span residues 75–108 (AVAH…LNEA) and 199–232 (EEKA…DPDT). 3 coiled-coil regions span residues 278–305 (EASL…LGQA), 377–464 (KAVL…NVQY), and 506–537 (YADL…LLDR). 2 disordered regions span residues 536–583 (DREL…MMAG) and 718–1006 (HMAL…LLQP). The interval 598-993 (HFSPGPFPGS…SSSPESQHGG (396 aa)) is his. Residues 724–752 (GPAPAPPQPCFPVPQPVPQSVPQPQPLPT) show a composition bias toward pro residues. Residues 754 to 763 (YTYSIGTKQH) are compositionally biased toward polar residues. Arg785 is subject to Omega-N-methylarginine. Composition is skewed to pro residues over residues 785–827 (RIGP…PQPQ), 856–866 (LTPPPPYPFTP), 900–909 (FPSPGPPHPH), and 934–972 (GPPP…PPPC). A run of 20 repeats spans residues 788 to 789 (PQ), 790 to 791 (PP), 792 to 793 (PQ), 794 to 795 (LQ), 796 to 797 (PQ), 798 to 799 (PQ), 800 to 801 (PQ), 802 to 803 (PQ), 804 to 805 (PQ), 806 to 807 (PP), 808 to 809 (PQ), 810 to 811 (PQ), 812 to 813 (PQ), 814 to 815 (PQ), 816 to 817 (PQ), 818 to 819 (PQ), 820 to 821 (PQ), 822 to 823 (PQ), 824 to 825 (PQ), and 826 to 827 (PQ). Positions 788-827 (PQPPPQLQPQPQPQPQPQPPPQPQPQPQPQPQPQPQPQPQ) are 20 X 2 AA approximate tandem repeats of P-Q. A phosphoserine mark is found at Ser985 and Ser986. Position 994 is a phosphothreonine (Thr994). Residues 1055 to 1315 (DAVWRELQEA…KFCHEALVRH (261 aa)) form the Tyrosine-protein phosphatase domain. The Phosphocysteine intermediate role is filled by Cys1255. 2 disordered regions span residues 1322–1351 (RHGV…QDLV) and 1381–1499 (ASLP…LNKT). The segment covering 1335-1348 (MSVSQKSHLPQDSQ) has biased composition (polar residues). Pro residues predominate over residues 1390 to 1419 (PGLPPASLPEPTPAPPSSPPPPSSPLPEPP). Residues 1427–1450 (VPEAPSLGPPSSSLELLASLTPEA) show a composition bias toward low complexity. Polar residues predominate over residues 1464-1473 (SKQNFLQAHN). Arg1478 bears the Omega-N-methylarginine mark. The span at 1482-1499 (PTDDPLSLLDPLWTLNKT) shows a compositional bias: low complexity.

Belongs to the protein-tyrosine phosphatase family. Non-receptor class subfamily. Interacts with GRAP2 and GRB2. Interacts with UBAP1 and CHMP4B. Ubiquitously expressed, with highest levels in brain, testis and kidney, and lowest levels in skeletal muscle.

It is found in the nucleus. The protein localises to the cytoplasm. Its subcellular location is the cytoplasmic vesicle. It localises to the endosome. The protein resides in the cytoskeleton. It is found in the cilium basal body. It carries out the reaction O-phospho-L-tyrosyl-[protein] + H2O = L-tyrosyl-[protein] + phosphate. Its function is as follows. Plays a role in sorting of endocytic ubiquitinated cargos into multivesicular bodies (MVBs) via its interaction with the ESCRT-I complex (endosomal sorting complex required for transport I), and possibly also other ESCRT complexes. May act as a negative regulator of Ras-mediated mitogenic activity. Plays a role in ciliogenesis. The polypeptide is Tyrosine-protein phosphatase non-receptor type 23 (Ptpn23) (Rattus norvegicus (Rat)).